A 1486-amino-acid polypeptide reads, in one-letter code: Homeobox protein cut-like 2 (1486 aa).

Residues D114–I167 form a disordered region. Residues P127 to E149 are compositionally biased toward basic and acidic residues. S143 is subject to Phosphoserine. Residues T195–A374 adopt a coiled-coil conformation. Disordered regions lie at residues L415–F481, P517–E549, E661–E690, V716–P758, Y800–T858, and G964–Q1032. Acidic residues predominate over residues P419–S428. A compositionally biased stretch (pro residues) spans Q443–G460. Residues Q461–P470 show a composition bias toward low complexity. Over residues P517–G532 the composition is skewed to pro residues. The CUT 1 DNA-binding region spans A544–R631. Residues A680–E690 are compositionally biased toward polar residues. Residues E690 to A717 are a coiled coil. Over residues S802–S816 the composition is skewed to low complexity. A compositionally biased stretch (acidic residues) spans P834–D844. Residues E845–A854 show a composition bias toward basic and acidic residues. Positions Q887 to S974 form a DNA-binding region, CUT 2. The segment covering V967 to A976 has biased composition (polar residues). Positions G1017–S1031 are enriched in low complexity. The CUT 3 DNA-binding region spans Q1038–L1125. The segment at residues I1168 to M1227 is a DNA-binding region (homeobox). A disordered region spans residues G1231 to P1453. A compositionally biased stretch (basic and acidic residues) spans E1266 to E1276. Residues E1283–K1293 are compositionally biased toward polar residues. Residues E1320–D1334 are compositionally biased toward basic and acidic residues. Over residues K1381 to A1401 the composition is skewed to polar residues. The segment covering S1402–I1420 has biased composition (low complexity). Pro residues predominate over residues S1421 to K1431.

It belongs to the CUT homeobox family.

The protein resides in the nucleus. Functionally, transcription factor involved in the control of neuronal proliferation and differentiation in the brain. Regulates dendrite development and branching, dendritic spine formation, and synaptogenesis in cortical layers II-III. Binds to DNA in a sequence-specific manner. In Homo sapiens (Human), this protein is Homeobox protein cut-like 2 (CUX2).